The following is a 310-amino-acid chain: N-acetyl-gamma-glutamyl-phosphate reductase (310 aa).

C117 is an active-site residue.

The protein belongs to the NAGSA dehydrogenase family. Type 2 subfamily.

Its subcellular location is the cytoplasm. The catalysed reaction is N-acetyl-L-glutamate 5-semialdehyde + phosphate + NADP(+) = N-acetyl-L-glutamyl 5-phosphate + NADPH + H(+). It functions in the pathway amino-acid biosynthesis; L-arginine biosynthesis; N(2)-acetyl-L-ornithine from L-glutamate: step 3/4. Functionally, catalyzes the NADPH-dependent reduction of N-acetyl-5-glutamyl phosphate to yield N-acetyl-L-glutamate 5-semialdehyde. The chain is N-acetyl-gamma-glutamyl-phosphate reductase from Brucella melitensis biotype 1 (strain ATCC 23456 / CCUG 17765 / NCTC 10094 / 16M).